A 77-amino-acid polypeptide reads, in one-letter code: U8-lycotoxin-Ls1j (77 aa).

Residues 1-20 form the signal peptide; it reads MKLIIFTGLILFAIVSLIEA. Residues 21–26 constitute a propeptide that is removed on maturation; that stretch reads QANNEK.

Belongs to the neurotoxin 19 (CSTX) family. 08 (U8-Lctx) subfamily. In terms of processing, contains 4 disulfide bonds. In terms of tissue distribution, expressed by the venom gland.

The protein localises to the secreted. The chain is U8-lycotoxin-Ls1j from Lycosa singoriensis (Wolf spider).